Consider the following 213-residue polypeptide: Signal recognition particle sec65 subunit (213 aa).

Residues 176–213 (MAALAGMGGPAPPMPTPQASSSQRKQKSIEPEYDLDLE) are disordered.

The protein belongs to the SRP19 family. Fungal signal recognition particle consists of a 7S RNA molecule (scR1) and at least six protein subunits: srp72, srp68, srp54, sec65, srp21 and srp14.

It is found in the cytoplasm. The protein localises to the nucleus. Signal-recognition-particle assembly has a crucial role in targeting secretory proteins to the rough endoplasmic reticulum membrane. It must be involved intimately in the translocation of a wide variety of protein substrates. The protein is Signal recognition particle sec65 subunit (sec65) of Schizosaccharomyces pombe (strain 972 / ATCC 24843) (Fission yeast).